Consider the following 125-residue polypeptide: DNA-directed RNA polymerase II subunit RPB9 (125 aa).

Residue Met-1 is modified to N-acetylmethionine. Zn(2+) contacts are provided by Cys-17, Cys-20, Cys-39, Cys-42, Cys-86, Cys-89, Cys-114, and Cys-119. Residues 17-42 (CQECNNMLYPKEDKENRILLYACRNC) form a C4-type zinc finger. The TFIIS-type zinc finger occupies 82–124 (EDHPCQKCGHKEAVFFQSHSARAEDAMRLYYVCTAPHCGHRWT).

It belongs to the archaeal RpoM/eukaryotic RPA12/RPB9/RPC11 RNA polymerase family. As to quaternary structure, component of the RNA polymerase II (Pol II) core complex consisting of 12 subunits: a ten-subunit catalytic core composed of POLR2A/RPB1, POLR2B/RPB2, POLR2C/RPB3, POLR2I/RPB9, POLR2J/RPB11, POLR2E/RPABC1, POLR2F/RPABC2, POLR2H/RPABC3, POLR2K/RPABC4 and POLR2L/RPABC5 and a mobile stalk composed of two subunits POLR2D/RPB4 and POLR2G/RPB7, protruding from the core and functioning primarily in transcription initiation. Part of Pol II(G) complex, in which Pol II core associates with an additional subunit POLR2M; unlike conventional Pol II, Pol II(G) functions as a transcriptional repressor. Part of TBP-based Pol II pre-initiation complex (PIC), in which Pol II core assembles with general transcription factors and other specific initiation factors including GTF2E1, GTF2E2, GTF2F1, GTF2F2, TCEA1, ERCC2, ERCC3, GTF2H2, GTF2H3, GTF2H4, GTF2H5, GTF2A1, GTF2A2, GTF2B and TBP; this large multi-subunit PIC complex mediates DNA unwinding and targets Pol II core to the transcription start site where the first phosphodiester bond forms.

The protein localises to the nucleus. It is found in the nucleolus. Its function is as follows. DNA-dependent RNA polymerase catalyzes the transcription of DNA into RNA using the four ribonucleoside triphosphates as substrates. Component of RNA polymerase II which synthesizes mRNA precursors and many functional non-coding RNAs. Pol II is the central component of the basal RNA polymerase II transcription machinery. It is composed of mobile elements that move relative to each other. POLR2I/RPB9 is part of the upper jaw surrounding the central large cleft and thought to grab the incoming DNA template. This is DNA-directed RNA polymerase II subunit RPB9 (POLR2I) from Bos taurus (Bovine).